Reading from the N-terminus, the 261-residue chain is Claudin-18 (261 aa).

At 1-6 the chain is on the cytoplasmic side; that stretch reads MSTTRC. A helical membrane pass occupies residues 7-27; it reads QVVGFLLSILGLAGCIVATEM. The Extracellular segment spans residues 28–80; that stretch reads DMWSTQDLYDNPVTAVFQYEGLWRSCVQQSSGFTECRPYLTILGLPAMLQAVR. Residues 81–101 form a helical membrane-spanning segment; it reads ALMIVGIVLSVIGLLVAIFAL. Residues 102 to 122 are Cytoplasmic-facing; that stretch reads KCIRMGNMDDSAKAKMTLTSG. The chain crosses the membrane as a helical span at residues 123-143; the sequence is IMFIIAGLCAIAGVSVFANML. At 144–174 the chain is on the extracellular side; that stretch reads VTNFWMSTASMFTSMGGMVQTVQTRYTFGAA. Residues 175-195 traverse the membrane as a helical segment; sequence LFVGWVAGGLTLIGGVLMCIA. A required for role in regulation of RANKL-induced osteoclast differentiation region spans residues 195–261; it reads ACRGLAPEET…QSPPSKYDYV (67 aa). Topologically, residues 196-261 are cytoplasmic; it reads CRGLAPEETN…QSPPSKYDYV (66 aa). S214 carries the post-translational modification Phosphoserine. Residues 228 to 261 form a disordered region; it reads SSGFESNTRNKKIYDGGARTEDEGQSPPSKYDYV. Residues 239–249 are compositionally biased toward basic and acidic residues; the sequence is KIYDGGARTED.

This sequence belongs to the claudin family. Interacts with TJP2/ZO-2. Interacts with TJP1/ZO-1. Interacts with YAP1 (phosphorylated); the interaction sequesters YAP1 away from the nucleus and thereby restricts transcription of YAP1 target genes. Interacts with CLDN19.

The protein resides in the cell junction. It is found in the tight junction. Its subcellular location is the cell membrane. Functionally, involved in alveolar fluid homeostasis via regulation of alveolar epithelial tight junction composition and therefore ion transport and solute permeability, potentially via downstream regulation of the actin cytoskeleton organization and beta-2-adrenergic signaling. Required for lung alveolarization and maintenance of the paracellular alveolar epithelial barrier. Acts to maintain epithelial progenitor cell proliferation and organ size, via regulation of YAP1 localization away from the nucleus and thereby restriction of YAP1 target gene transcription. Acts as a negative regulator of RANKL-induced osteoclast differentiation, potentially via relocation of TJP2/ZO-2 away from the nucleus, subsequently involved in bone resorption in response to calcium deficiency. Mediates the osteoprotective effects of estrogen, potentially via acting downstream of estrogen signaling independently of RANKL signaling pathways. The sequence is that of Claudin-18 (CLDN18) from Bos taurus (Bovine).